Reading from the N-terminus, the 168-residue chain is 3-isopropylmalate dehydratase small subunit 2 (168 aa).

The protein belongs to the LeuD family. LeuD type 2 subfamily. As to quaternary structure, heterodimer of LeuC and LeuD.

The enzyme catalyses (2R,3S)-3-isopropylmalate = (2S)-2-isopropylmalate. It participates in amino-acid biosynthesis; L-leucine biosynthesis; L-leucine from 3-methyl-2-oxobutanoate: step 2/4. Its function is as follows. Catalyzes the isomerization between 2-isopropylmalate and 3-isopropylmalate, via the formation of 2-isopropylmaleate. In Methanopyrus kandleri (strain AV19 / DSM 6324 / JCM 9639 / NBRC 100938), this protein is 3-isopropylmalate dehydratase small subunit 2 (leuD2).